A 265-amino-acid polypeptide reads, in one-letter code: Palmitoyltransferase ZDHHC21 (265 aa).

Over 1–16 the chain is Cytoplasmic; the sequence is MGLRIHFVVDPHGWCC. Residues 17 to 37 form a helical membrane-spanning segment; it reads MGLIVFVWLYNFFLIPKIVLF. Topologically, residues 38-44 are extracellular; it reads PHYEEGH. Residues 45–65 traverse the membrane as a helical segment; sequence IPGILIIIFYGIAMFCLVALV. Topologically, residues 66–133 are cytoplasmic; that stretch reads RASITDPGRL…NNCVGEDNHW (68 aa). The region spanning 90–140 is the DHHC domain; the sequence is ELCNKCNLMRPKRSHHCSRCGHCVRRMDHHCPWINNCVGEDNHWLFLQLCF. Catalysis depends on Cys-120, which acts as the S-palmitoyl cysteine intermediate. A helical transmembrane segment spans residues 134–154; sequence LFLQLCFYTELLTCYALMFSF. Topologically, residues 155 to 185 are extracellular; sequence CHYYYFLPLKKRNLDLFVVRHELAIMRLAAF. The chain crosses the membrane as a helical span at residues 186 to 206; it reads MGITMLVGITGLFYTQLIGII. The Cytoplasmic segment spans residues 207 to 265; that stretch reads TDTTSIEKMSNCCEEISRPRKPWQQTFSEVFGTRWKILWFIPFRRRQPLRVPYHFANHV.

Belongs to the DHHC palmitoyltransferase family.

The protein resides in the golgi apparatus membrane. Its subcellular location is the golgi apparatus. The protein localises to the cis-Golgi network membrane. It localises to the cell membrane. The enzyme catalyses L-cysteinyl-[protein] + hexadecanoyl-CoA = S-hexadecanoyl-L-cysteinyl-[protein] + CoA. In terms of biological role, palmitoyltransferase that catalyzes the addition of palmitate onto various protein substrates. Palmitoylates sex steroid hormone receptors, including ESR1, PGR and AR, thereby regulating their targeting to the plasma membrane. This affects rapid intracellular signaling by sex hormones via ERK and AKT kinases and the generation of cAMP, but does not affect that mediated by their nuclear receptor. Palmitoylates FYN, regulates its localization in hair follicles and plays a key role in epidermal homeostasis and hair follicle differentiation. Through the palmitoylation of PLCB1 and the regulation of PLCB1 downstream signaling may indirectly regulate the function of the endothelial barrier and the adhesion of leukocytes to the endothelium. Also has a palmitoyltransferase activity toward ADRA1D, positively regulating its activity and expression and may thereby play a role in vascular contraction. May also palmitoylate eNOS and LCK. The polypeptide is Palmitoyltransferase ZDHHC21 (Bos taurus (Bovine)).